The following is a 173-amino-acid chain: Crossover junction endodeoxyribonuclease RuvC (173 aa).

Active-site residues include aspartate 8, glutamate 67, and aspartate 139. The Mg(2+) site is built by aspartate 8, glutamate 67, and aspartate 139.

Belongs to the RuvC family. Homodimer which binds Holliday junction (HJ) DNA. The HJ becomes 2-fold symmetrical on binding to RuvC with unstacked arms; it has a different conformation from HJ DNA in complex with RuvA. In the full resolvosome a probable DNA-RuvA(4)-RuvB(12)-RuvC(2) complex forms which resolves the HJ. The cofactor is Mg(2+).

It is found in the cytoplasm. The catalysed reaction is Endonucleolytic cleavage at a junction such as a reciprocal single-stranded crossover between two homologous DNA duplexes (Holliday junction).. In terms of biological role, the RuvA-RuvB-RuvC complex processes Holliday junction (HJ) DNA during genetic recombination and DNA repair. Endonuclease that resolves HJ intermediates. Cleaves cruciform DNA by making single-stranded nicks across the HJ at symmetrical positions within the homologous arms, yielding a 5'-phosphate and a 3'-hydroxyl group; requires a central core of homology in the junction. The consensus cleavage sequence is 5'-(A/T)TT(C/G)-3'. Cleavage occurs on the 3'-side of the TT dinucleotide at the point of strand exchange. HJ branch migration catalyzed by RuvA-RuvB allows RuvC to scan DNA until it finds its consensus sequence, where it cleaves and resolves the cruciform DNA. In Shewanella frigidimarina (strain NCIMB 400), this protein is Crossover junction endodeoxyribonuclease RuvC.